We begin with the raw amino-acid sequence, 399 residues long: Forkhead box protein I3 (399 aa).

Disordered stretches follow at residues 87–109 (AGAQRGFAQPSASAPASPAGSAA), 221–287 (KRRR…ASTL), and 307–353 (SSSS…STVG). Over residues 96–109 (PSASAPASPAGSAA) the composition is skewed to low complexity. 2 positions are modified to phosphoserine: S99 and S103. Positions 129-223 (RPPYSYSALI…DNGNFRRKRR (95 aa)) form a DNA-binding region, fork-head. The Nuclear localization signal signature appears at 219 to 225 (RRKRRRR). Composition is skewed to polar residues over residues 228–248 (ASSNLTVPSGTSKSEGQSSRL) and 258–267 (SPSSILRPSQ). Phosphoserine is present on residues S258, S266, and S268. Composition is skewed to polar residues over residues 275-287 (TKSTASSPGASTL), 307-317 (SSSSMGNQRTL), and 328-353 (QLPSSTFPNTSVPDSSPDSMQLSTVG). Positions 385-393 (SMVNSLIYP) match the 9aaTAD motif.

In terms of processing, phosphorylation promotes the transcription factor activity. Dephosphorylation by protein phosphatase 2A (PP2A) reduces its activity. As to expression, specifically expressed in the epithelium in developing ectodermal appendages. Expressed in pharyngeal endoderm and ectoderm. Expressed in pre-placodal ectoderm. Down-regulated as the otic placode is induced. Expressed in teeth and hair follicles throughout embryogenesis. Expressed in mammary glands only during the earliest stages of development.

It is found in the nucleus. Its function is as follows. Transcription factor required for pharyngeal arch development, which is involved in hair, ear, jaw and dental development. May act as a pioneer transcription factor during pharyngeal arch development. Required for epithelial cell differentiation within the epidermis. Acts at multiple stages of otic placode induction: necessary for preplacodal ectoderm to execute an inner ear program. Required for hair follicle stem cell specification. Acts downstream of TBX1 for the formation of the thymus and parathyroid glands from the third pharyngeal pouch. This is Forkhead box protein I3 from Mus musculus (Mouse).